A 534-amino-acid chain; its full sequence is Probable alpha-galactosidase A (534 aa).

Residues 1–25 (MRLITRWIPLANALASTMPVQVVAS) form the signal peptide. A disulfide bridge connects residues C47 and C79. N50, N88, N94, and N124 each carry an N-linked (GlcNAc...) asparagine glycan. An intrachain disulfide couples C127 to C157. The active-site Nucleophile is the D155. N204 carries an N-linked (GlcNAc...) asparagine glycan. The active-site Proton donor is D213. Positions 413–534 (CSQVIPTGLI…GLPAGVHVAL (122 aa)) constitute a Ricin B-type lectin domain. A disulfide bond links C430 and C443. N444 carries N-linked (GlcNAc...) asparagine glycosylation. C468 and C481 are oxidised to a cystine.

The protein belongs to the glycosyl hydrolase 27 family.

The protein localises to the secreted. The enzyme catalyses Hydrolysis of terminal, non-reducing alpha-D-galactose residues in alpha-D-galactosides, including galactose oligosaccharides, galactomannans and galactolipids.. Hydrolyzes a variety of simple alpha-D-galactoside as well as more complex molecules such as oligosaccharides and polysaccharides. The chain is Probable alpha-galactosidase A (aglA) from Aspergillus oryzae (strain ATCC 42149 / RIB 40) (Yellow koji mold).